Consider the following 322-residue polypeptide: Ribosomal RNA small subunit methyltransferase H (322 aa).

S-adenosyl-L-methionine contacts are provided by residues 47-49, Asp67, Phe93, Asp112, and Gln119; that span reads GGH.

Belongs to the methyltransferase superfamily. RsmH family.

Its subcellular location is the cytoplasm. It carries out the reaction cytidine(1402) in 16S rRNA + S-adenosyl-L-methionine = N(4)-methylcytidine(1402) in 16S rRNA + S-adenosyl-L-homocysteine + H(+). Its function is as follows. Specifically methylates the N4 position of cytidine in position 1402 (C1402) of 16S rRNA. The chain is Ribosomal RNA small subunit methyltransferase H from Stenotrophomonas maltophilia (strain K279a).